Reading from the N-terminus, the 190-residue chain is Fe/S biogenesis protein NfuA (190 aa).

[4Fe-4S] cluster is bound by residues Cys148 and Cys151.

Belongs to the NfuA family. As to quaternary structure, homodimer. [4Fe-4S] cluster is required as a cofactor.

Involved in iron-sulfur cluster biogenesis. Binds a 4Fe-4S cluster, can transfer this cluster to apoproteins, and thereby intervenes in the maturation of Fe/S proteins. Could also act as a scaffold/chaperone for damaged Fe/S proteins. In Baumannia cicadellinicola subsp. Homalodisca coagulata, this protein is Fe/S biogenesis protein NfuA.